The primary structure comprises 259 residues: 5'-nucleotidase SurE (259 aa).

Residues Asp-8, Asp-9, Ser-39, and Asn-95 each contribute to the a divalent metal cation site.

This sequence belongs to the SurE nucleotidase family. The cofactor is a divalent metal cation.

Its subcellular location is the cytoplasm. The enzyme catalyses a ribonucleoside 5'-phosphate + H2O = a ribonucleoside + phosphate. In terms of biological role, nucleotidase that shows phosphatase activity on nucleoside 5'-monophosphates. This Pseudothermotoga lettingae (strain ATCC BAA-301 / DSM 14385 / NBRC 107922 / TMO) (Thermotoga lettingae) protein is 5'-nucleotidase SurE.